A 329-amino-acid polypeptide reads, in one-letter code: MHPQSVLHSGYFHPLLRNWQTAATSLSASNLIYPIFVTDVPDDKQPIASLPGVARYGVNRLEEMLKPLVEEGLRCVLIFGVPSRVPKDERGSAADSEDSPAIEAIRLLRKNFPSLLVACDVCLCPYTSHGHCGLLSENGSFQAEESRQRLAEVALAYAKAGCQVVAPSDMMDGRVEAIKEALMAHGFGNRVSVMSYSAKFASCFYGPFRDAAQSSPAFGDRRCYQLPPGARGLALRAVDRDVREGADLLMVKPGTPYLDIVREVKNKHPELPLAVYHVSGEFAMLWHGAQAGAFDLKAAVLEVMTAFRRAGADVIITYYTPQLLQWLKE.

Zn(2+) contacts are provided by Cys122, Cys124, His131, and Cys132. Lys199 functions as the Schiff-base intermediate with substrate in the catalytic mechanism. Lys199 is subject to N6-succinyllysine. Arg209 serves as a coordination point for 5-aminolevulinate. Position 215 is a phosphoserine (Ser215). Arg221 lines the 5-aminolevulinate pocket. Position 223 (Cys223) interacts with Zn(2+). Residue Lys252 is the Schiff-base intermediate with substrate of the active site. Lys252 is modified (N6-succinyllysine). Residues Ser279 and Tyr318 each contribute to the 5-aminolevulinate site.

It belongs to the ALAD family. Homooctamer; active form. Homohexamer; low activity form. Requires Zn(2+) as cofactor.

Its subcellular location is the cytoplasm. It localises to the cytosol. The catalysed reaction is 2 5-aminolevulinate = porphobilinogen + 2 H2O + H(+). It participates in porphyrin-containing compound metabolism; protoporphyrin-IX biosynthesis; coproporphyrinogen-III from 5-aminolevulinate: step 1/4. Can alternate between a fully active homooctamer and a low-activity homohexamer. A bound magnesium ion may promote the assembly of the fully active homooctamer. The magnesium-binding site is absent in the low-activity homohexamer. Inhibited by compounds that favor the hexameric state. Inhibited by divalent lead ions. The lead ions partially displace the zinc cofactor. In terms of biological role, catalyzes an early step in the biosynthesis of tetrapyrroles. Binds two molecules of 5-aminolevulinate per subunit, each at a distinct site, and catalyzes their condensation to form porphobilinogen. The polypeptide is Delta-aminolevulinic acid dehydratase (ALAD) (Bos taurus (Bovine)).